We begin with the raw amino-acid sequence, 940 residues long: Isoleucine--tRNA ligase (940 aa).

Positions 58–68 (PYANGSIHIGH) match the 'HIGH' region motif. Position 564 (Glu-564) interacts with L-isoleucyl-5'-AMP. Residues 605 to 609 (KMSKS) carry the 'KMSKS' region motif. Lys-608 serves as a coordination point for ATP. 4 residues coordinate Zn(2+): Cys-903, Cys-906, Cys-923, and Cys-926.

The protein belongs to the class-I aminoacyl-tRNA synthetase family. IleS type 1 subfamily. Monomer. The cofactor is Zn(2+).

The protein resides in the cytoplasm. It catalyses the reaction tRNA(Ile) + L-isoleucine + ATP = L-isoleucyl-tRNA(Ile) + AMP + diphosphate. In terms of biological role, catalyzes the attachment of isoleucine to tRNA(Ile). As IleRS can inadvertently accommodate and process structurally similar amino acids such as valine, to avoid such errors it has two additional distinct tRNA(Ile)-dependent editing activities. One activity is designated as 'pretransfer' editing and involves the hydrolysis of activated Val-AMP. The other activity is designated 'posttransfer' editing and involves deacylation of mischarged Val-tRNA(Ile). The sequence is that of Isoleucine--tRNA ligase from Shewanella baltica (strain OS195).